A 508-amino-acid chain; its full sequence is Photosystem II CP47 reaction center protein (508 aa).

A run of 6 helical transmembrane segments spans residues 21 to 36, 101 to 115, 140 to 156, 203 to 218, 237 to 252, and 457 to 472; these read SVHI…WAGS, IVFS…IWHW, GIHL…FGAF, IAAG…FHLS, VLSS…AFVV, and SFAL…HGAR.

Belongs to the PsbB/PsbC family. PsbB subfamily. In terms of assembly, PSII is composed of 1 copy each of membrane proteins PsbA, PsbB, PsbC, PsbD, PsbE, PsbF, PsbH, PsbI, PsbJ, PsbK, PsbL, PsbM, PsbT, PsbX, PsbY, PsbZ, Psb30/Ycf12, at least 3 peripheral proteins of the oxygen-evolving complex and a large number of cofactors. It forms dimeric complexes. The cofactor is Binds multiple chlorophylls. PSII binds additional chlorophylls, carotenoids and specific lipids..

The protein resides in the plastid. The protein localises to the chloroplast thylakoid membrane. In terms of biological role, one of the components of the core complex of photosystem II (PSII). It binds chlorophyll and helps catalyze the primary light-induced photochemical processes of PSII. PSII is a light-driven water:plastoquinone oxidoreductase, using light energy to abstract electrons from H(2)O, generating O(2) and a proton gradient subsequently used for ATP formation. This Arabis hirsuta (Hairy rock-cress) protein is Photosystem II CP47 reaction center protein.